The chain runs to 258 residues: UPF0246 protein LHK_02295 (258 aa).

Belongs to the UPF0246 family.

The protein is UPF0246 protein LHK_02295 of Laribacter hongkongensis (strain HLHK9).